A 101-amino-acid chain; its full sequence is Small ribosomal subunit protein uS14 (101 aa).

It belongs to the universal ribosomal protein uS14 family. In terms of assembly, part of the 30S ribosomal subunit. Contacts proteins S3 and S10.

Its function is as follows. Binds 16S rRNA, required for the assembly of 30S particles and may also be responsible for determining the conformation of the 16S rRNA at the A site. The chain is Small ribosomal subunit protein uS14 from Dinoroseobacter shibae (strain DSM 16493 / NCIMB 14021 / DFL 12).